Here is a 338-residue protein sequence, read N- to C-terminus: Holliday junction branch migration complex subunit RuvB (338 aa).

Residues 1 to 22 (MIEADRLIHAEPQGPEERDEQI) are disordered. Positions 4-187 (ADRLIHAEPQ…FGIPLRLEFY (184 aa)) are large ATPase domain (RuvB-L). ATP contacts are provided by residues Arg-27, Gly-68, Lys-71, Thr-72, Thr-73, 134 to 136 (EDY), Arg-177, Tyr-187, and Arg-224. Position 72 (Thr-72) interacts with Mg(2+). The small ATPAse domain (RuvB-S) stretch occupies residues 188 to 258 (NTKDLSSIVS…VADLALDMLD (71 aa)). Residues 261 to 338 (SEGFDYMDRK…RHFDIIQPEK (78 aa)) are head domain (RuvB-H). 3 residues coordinate DNA: Arg-297, Arg-316, and Arg-321.

The protein belongs to the RuvB family. In terms of assembly, homohexamer. Forms an RuvA(8)-RuvB(12)-Holliday junction (HJ) complex. HJ DNA is sandwiched between 2 RuvA tetramers; dsDNA enters through RuvA and exits via RuvB. An RuvB hexamer assembles on each DNA strand where it exits the tetramer. Each RuvB hexamer is contacted by two RuvA subunits (via domain III) on 2 adjacent RuvB subunits; this complex drives branch migration. In the full resolvosome a probable DNA-RuvA(4)-RuvB(12)-RuvC(2) complex forms which resolves the HJ.

It localises to the cytoplasm. It catalyses the reaction ATP + H2O = ADP + phosphate + H(+). Functionally, the RuvA-RuvB-RuvC complex processes Holliday junction (HJ) DNA during genetic recombination and DNA repair, while the RuvA-RuvB complex plays an important role in the rescue of blocked DNA replication forks via replication fork reversal (RFR). RuvA specifically binds to HJ cruciform DNA, conferring on it an open structure. The RuvB hexamer acts as an ATP-dependent pump, pulling dsDNA into and through the RuvAB complex. RuvB forms 2 homohexamers on either side of HJ DNA bound by 1 or 2 RuvA tetramers; 4 subunits per hexamer contact DNA at a time. Coordinated motions by a converter formed by DNA-disengaged RuvB subunits stimulates ATP hydrolysis and nucleotide exchange. Immobilization of the converter enables RuvB to convert the ATP-contained energy into a lever motion, pulling 2 nucleotides of DNA out of the RuvA tetramer per ATP hydrolyzed, thus driving DNA branch migration. The RuvB motors rotate together with the DNA substrate, which together with the progressing nucleotide cycle form the mechanistic basis for DNA recombination by continuous HJ branch migration. Branch migration allows RuvC to scan DNA until it finds its consensus sequence, where it cleaves and resolves cruciform DNA. The polypeptide is Holliday junction branch migration complex subunit RuvB (Shewanella sediminis (strain HAW-EB3)).